A 427-amino-acid chain; its full sequence is Serine hydroxymethyltransferase (427 aa).

(6S)-5,6,7,8-tetrahydrofolate contacts are provided by residues L124 and G128–L130. K233 carries the N6-(pyridoxal phosphate)lysine modification.

It belongs to the SHMT family. As to quaternary structure, homodimer. The cofactor is pyridoxal 5'-phosphate.

It localises to the cytoplasm. It carries out the reaction (6R)-5,10-methylene-5,6,7,8-tetrahydrofolate + glycine + H2O = (6S)-5,6,7,8-tetrahydrofolate + L-serine. Its pathway is one-carbon metabolism; tetrahydrofolate interconversion. It participates in amino-acid biosynthesis; glycine biosynthesis; glycine from L-serine: step 1/1. Catalyzes the reversible interconversion of serine and glycine with tetrahydrofolate (THF) serving as the one-carbon carrier. This reaction serves as the major source of one-carbon groups required for the biosynthesis of purines, thymidylate, methionine, and other important biomolecules. Also exhibits THF-independent aldolase activity toward beta-hydroxyamino acids, producing glycine and aldehydes, via a retro-aldol mechanism. In Acidothermus cellulolyticus (strain ATCC 43068 / DSM 8971 / 11B), this protein is Serine hydroxymethyltransferase.